We begin with the raw amino-acid sequence, 702 residues long: Phosphoglycerol transferase I (702 aa).

3 helical membrane passes run 3 to 25 (WILALSLLLLLLLLVASPRLAWL), 73 to 95 (GYIAVFIGMVLLSLSPLVLLRVR), and 102 to 124 (GGGAVFGAFVVMLLVSVAVSPLY).

It belongs to the OpgB family.

The protein resides in the cell inner membrane. The enzyme catalyses a phosphatidylglycerol + a membrane-derived-oligosaccharide D-glucose = a 1,2-diacyl-sn-glycerol + a membrane-derived-oligosaccharide 6-(glycerophospho)-D-glucose.. It functions in the pathway glycan metabolism; osmoregulated periplasmic glucan (OPG) biosynthesis. Its function is as follows. Transfers a phosphoglycerol residue from phosphatidylglycerol to the membrane-bound nascent glucan backbones. This is Phosphoglycerol transferase I from Xanthomonas campestris pv. campestris (strain ATCC 33913 / DSM 3586 / NCPPB 528 / LMG 568 / P 25).